We begin with the raw amino-acid sequence, 311 residues long: MILQDFEKKIFKFIRDYKIFNKYDKILLGVSGGKDSMSLLHVMSKLSKTMGFEISVAHLNHCMREEADNDEAFVRQACWKLKIPFFSKKVDVFTYSKKNKVGVEVAGRKLRYEFFYETLRRLSYNKIATAHHMDDLFETMIYRILRGTGIYGLGGLIPIEEEITKPMLCVDLEEIKNYVTINNIEYVEDKYNYSLDYARNKIRYEITPLFKKINPRYKESFFRLAKIIWSYREEVKRKFEERSEISKDSLKLRLENDFFDGEIIRIAFLKFGKYPPNMEETEKIIKMRKGGVRKINGLSITKKSDSLLVKI.

Residue 31–36 (SGGKDS) participates in ATP binding.

This sequence belongs to the tRNA(Ile)-lysidine synthase family.

The protein localises to the cytoplasm. The catalysed reaction is cytidine(34) in tRNA(Ile2) + L-lysine + ATP = lysidine(34) in tRNA(Ile2) + AMP + diphosphate + H(+). Its function is as follows. Ligates lysine onto the cytidine present at position 34 of the AUA codon-specific tRNA(Ile) that contains the anticodon CAU, in an ATP-dependent manner. Cytidine is converted to lysidine, thus changing the amino acid specificity of the tRNA from methionine to isoleucine. The polypeptide is tRNA(Ile)-lysidine synthase (Petrotoga mobilis (strain DSM 10674 / SJ95)).